Reading from the N-terminus, the 662-residue chain is MKTSLLADPLFFTTPQLARFRFAFKLTFAVVLSLFLGFHLQLGTPNTAVMTAAIVAGGPAFVAGGEPFSGAIRHRGMLRIVGTFIGCIGALAIIISTIRAPIVMMLLCCIWAGLCNWISSLVKIENSYIFGLAGYTTLIIILATQGTPMLTPQFAVERCSEIVLGIACVIFADLLFAPRSIKQDVDRSLRELMVGQYRLLQLSMSGADEGTIDTTWHALVRKTTALDGMRSNLMMESSRWQNSNRRLTSLHTQSLTMITQACETYLTLQDVPTHVKSSLKQVLDPPVESFGDVHHHVKALRHLIAADSRDVPPTLVSWVGAATRYLLLVKGVQTNGRISKIEADVLNHDVEIKVPSAETHHAMINGLRTGVATALGCLFWLSTGWSSGGICMMMIAVVTSLAMRLPNPKMVGMDFLYGTIYSLPLGALMFMFILPSTQQSILLLCLSLGAMTFFLGVEVQKRRLGSLGALISTINVLLLNNPMTFNISLFLDNAIGQIIGCFVALMVILLIRDNTKSHTGRTLLNRFVYGAVSALTTDTTRRKENHLPALYQQLFLLLNRFPDDMAKYRLALWMIIMHQRLRTLDIPQNAALSAFHRQIRATAEQVILARRDTTRSRYFTQLLEELERYQQILTEQQLPPNVTVPVGRLTGILRDYQHALSD.

Transmembrane regions (helical) follow at residues 22–42, 52–72, 78–98, 102–122, 129–149, 161–181, 378–398, 415–435, 439–459, 467–487, and 491–511; these read FAFK…HLQL, AAIV…SGAI, LRIV…ISTI, IVMM…SSLV, IFGL…GTPM, EIVL…PRSI, LFWL…IAVV, FLYG…FILP, QSIL…GVEV, LGAL…TFNI, and LDNA…ILLI.

The protein belongs to the aromatic acid exporter ArAE (TC 2.A.85) family.

Its subcellular location is the cell inner membrane. Functionally, forms an efflux pump with AaeA. Could function as a metabolic relief valve, allowing to eliminate certain compounds when they accumulate to high levels in the cell. The protein is p-hydroxybenzoic acid efflux pump subunit AaeB of Pectobacterium parmentieri (strain WPP163) (Pectobacterium wasabiae (strain WPP163)).